A 99-amino-acid polypeptide reads, in one-letter code: Aspartyl/glutamyl-tRNA(Asn/Gln) amidotransferase subunit C (99 aa).

This sequence belongs to the GatC family. In terms of assembly, heterotrimer of A, B and C subunits.

It catalyses the reaction L-glutamyl-tRNA(Gln) + L-glutamine + ATP + H2O = L-glutaminyl-tRNA(Gln) + L-glutamate + ADP + phosphate + H(+). The enzyme catalyses L-aspartyl-tRNA(Asn) + L-glutamine + ATP + H2O = L-asparaginyl-tRNA(Asn) + L-glutamate + ADP + phosphate + 2 H(+). Its function is as follows. Allows the formation of correctly charged Asn-tRNA(Asn) or Gln-tRNA(Gln) through the transamidation of misacylated Asp-tRNA(Asn) or Glu-tRNA(Gln) in organisms which lack either or both of asparaginyl-tRNA or glutaminyl-tRNA synthetases. The reaction takes place in the presence of glutamine and ATP through an activated phospho-Asp-tRNA(Asn) or phospho-Glu-tRNA(Gln). The polypeptide is Aspartyl/glutamyl-tRNA(Asn/Gln) amidotransferase subunit C (Corynebacterium glutamicum (strain R)).